Consider the following 425-residue polypeptide: 2-methylserine hydroxymethyltransferase (425 aa).

Residues Leu-126 and 130–132 contribute to the (6S)-5,6,7,8-tetrahydrofolate site; that span reads GHL. Lys-235 carries the N6-(pyridoxal phosphate)lysine modification. Glu-251 lines the (6S)-5,6,7,8-tetrahydrofolate pocket.

This sequence belongs to the SHMT family. In terms of assembly, homodimer. The cofactor is pyridoxal 5'-phosphate.

The protein localises to the cytoplasm. It carries out the reaction (6R)-5,10-methylene-5,6,7,8-tetrahydrofolate + D-alanine + H2O = 2-methylserine + (6S)-5,6,7,8-tetrahydrofolate. It functions in the pathway one-carbon metabolism; tetrahydrofolate interconversion. Functionally, catalyzes the reversible interconversion of alpha-methyl-L-serine to D-alanine with tetrahydrofolate (THF) serving as the one-carbon carrier. Cannot use alpha-methyl-D-serine, L-serine, D-serine or L-alanine. The sequence is that of 2-methylserine hydroxymethyltransferase from Ensifer sp.